The primary structure comprises 425 residues: Dihydroorotase (425 aa).

Zn(2+) contacts are provided by His-61 and His-63. Substrate-binding positions include 63-65 and Asn-95; that span reads HLR. Positions 153, 180, and 233 each coordinate Zn(2+). Residue Asn-279 participates in substrate binding. Residue Asp-306 participates in Zn(2+) binding. The active site involves Asp-306. A substrate-binding site is contributed by His-310.

It belongs to the metallo-dependent hydrolases superfamily. DHOase family. Class I DHOase subfamily. It depends on Zn(2+) as a cofactor.

The catalysed reaction is (S)-dihydroorotate + H2O = N-carbamoyl-L-aspartate + H(+). It participates in pyrimidine metabolism; UMP biosynthesis via de novo pathway; (S)-dihydroorotate from bicarbonate: step 3/3. Its function is as follows. Catalyzes the reversible cyclization of carbamoyl aspartate to dihydroorotate. The protein is Dihydroorotase of Trichlorobacter lovleyi (strain ATCC BAA-1151 / DSM 17278 / SZ) (Geobacter lovleyi).